The chain runs to 300 residues: Actin-related protein 2/3 complex subunit 2 (300 aa).

Lysine 275 and lysine 295 each carry N6-acetyllysine.

It belongs to the ARPC2 family. As to quaternary structure, component of the Arp2/3 complex composed of ACTR2/ARP2, ACTR3/ARP3, ARPC1B/p41-ARC, ARPC2/p34-ARC, ARPC3/p21-ARC, ARPC4/p20-ARC and ARPC5/p16-ARC. Interacts with SHANK3; the interaction probably mediates the association of SHANK3 with the Arp2/3 complex.

It localises to the cytoplasm. The protein localises to the cytoskeleton. It is found in the cell projection. The protein resides in the synapse. Its subcellular location is the synaptosome. It localises to the nucleus. Its function is as follows. Actin-binding component of the Arp2/3 complex, a multiprotein complex that mediates actin polymerization upon stimulation by nucleation-promoting factor (NPF). The Arp2/3 complex mediates the formation of branched actin networks in the cytoplasm, providing the force for cell motility. Seems to contact the mother actin filament. In addition to its role in the cytoplasmic cytoskeleton, the Arp2/3 complex also promotes actin polymerization in the nucleus, thereby regulating gene transcription and repair of damaged DNA. The Arp2/3 complex promotes homologous recombination (HR) repair in response to DNA damage by promoting nuclear actin polymerization, leading to drive motility of double-strand breaks (DSBs). This is Actin-related protein 2/3 complex subunit 2 from Rattus norvegicus (Rat).